A 496-amino-acid polypeptide reads, in one-letter code: Probable cytosol aminopeptidase (496 aa).

The Mn(2+) site is built by Lys266 and Asp271. Residue Lys278 is part of the active site. Mn(2+) contacts are provided by Asp289, Asp348, and Glu350. Residue Arg352 is part of the active site.

It belongs to the peptidase M17 family. It depends on Mn(2+) as a cofactor.

It is found in the cytoplasm. It carries out the reaction Release of an N-terminal amino acid, Xaa-|-Yaa-, in which Xaa is preferably Leu, but may be other amino acids including Pro although not Arg or Lys, and Yaa may be Pro. Amino acid amides and methyl esters are also readily hydrolyzed, but rates on arylamides are exceedingly low.. The enzyme catalyses Release of an N-terminal amino acid, preferentially leucine, but not glutamic or aspartic acids.. In terms of biological role, presumably involved in the processing and regular turnover of intracellular proteins. Catalyzes the removal of unsubstituted N-terminal amino acids from various peptides. The chain is Probable cytosol aminopeptidase from Azotobacter vinelandii (strain DJ / ATCC BAA-1303).